The sequence spans 355 residues: Probable nitronate monooxygenase (355 aa).

FMN is bound by residues N71, Q175, G180, G218, and Q237–T240.

It belongs to the nitronate monooxygenase family. NMO class I subfamily. Requires FMN as cofactor.

The enzyme catalyses 3 propionate 3-nitronate + 3 O2 + H2O = 3 3-oxopropanoate + 2 nitrate + nitrite + H2O2 + 3 H(+). Nitronate monooxygenase that uses molecular oxygen to catalyze the oxidative denitrification of alkyl nitronates. Acts on propionate 3-nitronate (P3N), the presumed physiological substrate. Probably functions in the detoxification of P3N, a metabolic poison produced by plants and fungi as a defense mechanism. This chain is Probable nitronate monooxygenase, found in Staphylococcus aureus (strain JH1).